The following is an 851-amino-acid chain: DEAD-box ATP-dependent RNA helicase 29 (851 aa).

Positions 1-49 are disordered; the sequence is MARLNPSKPSSRGGKPRSSSADAMAEHKPPPGRPKREGEGASKKKAKSG. Residues 7–20 show a composition bias toward low complexity; it reads SKPSSRGGKPRSSS. The span at 24–42 shows a compositional bias: basic and acidic residues; that stretch reads MAEHKPPPGRPKREGEGAS. A Q motif motif is present at residues 49–77; the sequence is GGFESMGLCEEVYRGVRHKGYRVPTPIQR. Residues 80–253 enclose the Helicase ATP-binding domain; it reads MPLILAGHDI…KAGLRDPQIV (174 aa). Residue 93 to 100 participates in ATP binding; the sequence is ARTGSGKT. A DEAD box motif is present at residues 201-204; sequence DEAD. Residues 277–426 enclose the Helicase C-terminal domain; that stretch reads KLAALLYLVR…PAPTEEELLK (150 aa). Positions 702-851 are disordered; it reads KWQQKTHRSI…KGKMKGKGTR (150 aa). Basic residues predominate over residues 733-746; sequence RGNRKHTAAGRGRR. Basic and acidic residues-rich tracts occupy residues 773 to 787 and 796 to 825; these read DIAR…ESKF and RHDG…DGNG. The segment covering 841 to 851 has biased composition (basic residues); sequence GKGKMKGKGTR.

This sequence belongs to the DEAD box helicase family. DDX54/DBP10 subfamily.

It catalyses the reaction ATP + H2O = ADP + phosphate + H(+). This chain is DEAD-box ATP-dependent RNA helicase 29, found in Oryza sativa subsp. indica (Rice).